Here is a 420-residue protein sequence, read N- to C-terminus: Chaperone protein dnaJ 3 (420 aa).

The J domain occupies K14–G75. Residues G135 to K219 form a CR-type zinc finger. C148, C151, C164, C167, C191, C194, C207, and C210 together coordinate Zn(2+). 4 CXXCXGXG motif repeats span residues C148 to G155, C164 to G171, C191 to G198, and C207 to K214. The tract at residues E376–Q420 is disordered. Residues T377 to R390 show a composition bias toward basic and acidic residues. Residue C417 is modified to Cysteine methyl ester. The S-farnesyl cysteine moiety is linked to residue C417. Positions A418–Q420 are cleaved as a propeptide — removed in mature form.

The protein belongs to the DnaJ family. A/I subfamily. In terms of assembly, homodimer. The cofactor is Zn(2+). Farnesylated. As to expression, roots, shoots, flowers, siliques and cotyledons.

It is found in the membrane. Its function is as follows. Plays a continuous role in plant development probably in the structural organization of compartments. The sequence is that of Chaperone protein dnaJ 3 (ATJ3) from Arabidopsis thaliana (Mouse-ear cress).